The primary structure comprises 393 residues: Uroporphyrinogen decarboxylase, chloroplastic (393 aa).

Residues 1 to 64 (MATACPPLSL…AGERNQREEV (64 aa)) are disordered. Residues 23–37 (AGPNAGSSRPSAAAP) are compositionally biased toward low complexity. Basic and acidic residues predominate over residues 38-50 (SERRSWRRPRPDG). Residues 73 to 77 (RQAGR), Phe-92, Ser-122, Asp-123, Tyr-200, Ser-255, and His-370 each bind substrate.

The protein belongs to the uroporphyrinogen decarboxylase family. As to quaternary structure, homodimer.

The protein resides in the plastid. It localises to the chloroplast. It carries out the reaction uroporphyrinogen III + 4 H(+) = coproporphyrinogen III + 4 CO2. Its pathway is porphyrin-containing compound metabolism; protoporphyrin-IX biosynthesis; coproporphyrinogen-III from 5-aminolevulinate: step 4/4. Catalyzes the decarboxylation of four acetate groups of uroporphyrinogen-III to yield coproporphyrinogen-III. The chain is Uroporphyrinogen decarboxylase, chloroplastic (LES22) from Zea mays (Maize).